The following is a 160-amino-acid chain: MAKPKTPEEKNYKVIAENRRARREYAIEEDLEVGIVLEGSEVKSLREGGSNIAESYATVDDGELWLVNSYIAPYAQAKTWKHEERRRRKLLVSRRELSRLWNATQRQGMTLVPLVMYFNHRGLVKLKIGVAKGKKLADKRQTDAKRDWNRQKQRLLKQNL.

It belongs to the SmpB family.

The protein localises to the cytoplasm. Required for rescue of stalled ribosomes mediated by trans-translation. Binds to transfer-messenger RNA (tmRNA), required for stable association of tmRNA with ribosomes. tmRNA and SmpB together mimic tRNA shape, replacing the anticodon stem-loop with SmpB. tmRNA is encoded by the ssrA gene; the 2 termini fold to resemble tRNA(Ala) and it encodes a 'tag peptide', a short internal open reading frame. During trans-translation Ala-aminoacylated tmRNA acts like a tRNA, entering the A-site of stalled ribosomes, displacing the stalled mRNA. The ribosome then switches to translate the ORF on the tmRNA; the nascent peptide is terminated with the 'tag peptide' encoded by the tmRNA and targeted for degradation. The ribosome is freed to recommence translation, which seems to be the essential function of trans-translation. In Dinoroseobacter shibae (strain DSM 16493 / NCIMB 14021 / DFL 12), this protein is SsrA-binding protein.